The following is a 407-amino-acid chain: 1-deoxy-D-xylulose 5-phosphate reductoisomerase (407 aa).

NADPH-binding residues include Thr22, Gly23, Ser24, Ile25, Gly48, Asn51, and Asn128. Position 129 (Lys129) interacts with 1-deoxy-D-xylulose 5-phosphate. Glu130 lines the NADPH pocket. Residue Asp152 coordinates Mn(2+). Positions 153, 154, 178, and 201 each coordinate 1-deoxy-D-xylulose 5-phosphate. Position 154 (Glu154) interacts with Mn(2+). An NADPH-binding site is contributed by Gly207. Residues Ser214, Asn219, Lys220, and Glu223 each coordinate 1-deoxy-D-xylulose 5-phosphate. Residue Glu223 participates in Mn(2+) binding.

This sequence belongs to the DXR family. Mg(2+) serves as cofactor. Requires Mn(2+) as cofactor.

The catalysed reaction is 2-C-methyl-D-erythritol 4-phosphate + NADP(+) = 1-deoxy-D-xylulose 5-phosphate + NADPH + H(+). The protein operates within isoprenoid biosynthesis; isopentenyl diphosphate biosynthesis via DXP pathway; isopentenyl diphosphate from 1-deoxy-D-xylulose 5-phosphate: step 1/6. Catalyzes the NADPH-dependent rearrangement and reduction of 1-deoxy-D-xylulose-5-phosphate (DXP) to 2-C-methyl-D-erythritol 4-phosphate (MEP). This Mycobacterium avium (strain 104) protein is 1-deoxy-D-xylulose 5-phosphate reductoisomerase.